A 656-amino-acid polypeptide reads, in one-letter code: Nuclear elongation and deformation protein 1 (656 aa).

Phosphoserine is present on residues Ser99 and Ser103. Residues 99 to 118 (SPIVSPTTSPKQTPSINVTE) are compositionally biased toward polar residues. The interval 99–121 (SPIVSPTTSPKQTPSINVTEPQD) is disordered. Residue Thr106 is modified to Phosphothreonine. A phosphoserine mark is found at Ser107, Ser159, and Ser286. Disordered stretches follow at residues 282–328 (VYGH…VSES) and 587–656 (SDEE…ENAV). Residues 291-300 (PSRTPASPKS) are compositionally biased toward low complexity. Phosphoserine is present on residues Ser318, Ser321, and Ser587. The span at 318 to 328 (SEQSLSPVSES) shows a compositional bias: polar residues. Residues 596–609 (KSTSKSPKTPKNTK) are compositionally biased toward low complexity. The segment covering 640-656 (FEGEEDEEGEEDVENAV) has biased composition (acidic residues).

The protein belongs to the lipin family. As to quaternary structure, interacts with dis3, pim1 and nup189.

May have a role in the maintenance of the nuclear envelope structure and in minichromosome stability. The protein is Nuclear elongation and deformation protein 1 (ned1) of Schizosaccharomyces pombe (strain 972 / ATCC 24843) (Fission yeast).